A 513-amino-acid polypeptide reads, in one-letter code: 2,3-bisphosphoglycerate-independent phosphoglycerate mutase (513 aa).

Residues Asp-12 and Ser-62 each contribute to the Mn(2+) site. Ser-62 acts as the Phosphoserine intermediate in catalysis. Substrate contacts are provided by residues His-123, 153–154 (RD), Arg-185, Arg-191, 260–263 (RPDR), and Lys-333. 5 residues coordinate Mn(2+): Asp-400, His-404, Asp-441, His-442, and His-460.

The protein belongs to the BPG-independent phosphoglycerate mutase family. Monomer. Mn(2+) serves as cofactor.

The enzyme catalyses (2R)-2-phosphoglycerate = (2R)-3-phosphoglycerate. It participates in carbohydrate degradation; glycolysis; pyruvate from D-glyceraldehyde 3-phosphate: step 3/5. In terms of biological role, catalyzes the interconversion of 2-phosphoglycerate and 3-phosphoglycerate. This is 2,3-bisphosphoglycerate-independent phosphoglycerate mutase from Clostridium tetani (strain Massachusetts / E88).